Consider the following 988-residue polypeptide: Vacuolar sorting protein 18 (988 aa).

One copy of the CHCR repeat lies at 589–749 (NKNLNPRRLI…VVKQEKGAKR (161 aa)). The stretch at 785–819 (KEAICSSLEDYNKQIEQLKEEMNDATRGADNIRND) forms a coiled coil. An RING-type; degenerate zinc finger spans residues 836 to 886 (CGVCKRKILMMSGDFRMAQGYSSAGPLAPFYVFPCGHSFHAQCLITHVTSC).

This sequence belongs to the VPS18 family. In terms of assembly, core component of at least two putative endosomal tethering complexes, the homotypic fusion and vacuole protein sorting (HOPS) complex and the class C core vacuole/endosome tethering (CORVET) complex. Their common core is composed of the class C Vps proteins VPS11, VCL1, VPS18 and VPS33, which in HOPS further associates with VPS39 and VPS41 and in CORVET with VPS3.

It localises to the endosome membrane. It is found in the vacuole membrane. The protein resides in the cytoplasm. Essential protein required during embryogenesis. Believed to act as a core component of the putative HOPS endosomal tethering complex and of the class C core vacuole/endosome tethering (CORVET) complex. CORVET is required for vacuolar transport of SYP22. HOPS is required for the central vacuole formation. Involved in root development. Plays a role in vesicle-mediated protein trafficking to lysosomal compartments including the endocytic membrane transport pathways. This Arabidopsis thaliana (Mouse-ear cress) protein is Vacuolar sorting protein 18.